The primary structure comprises 144 residues: Protein cornichon homolog 1 (144 aa).

Over Met1–Tyr10 the chain is Cytoplasmic. The chain crosses the membrane as a helical span at residues Met11–Phe31. Over Asp32–Tyr56 the chain is Lumenal. The helical transmembrane segment at Leu57–Leu77 threads the bilayer. At Asn78 to Lys122 the chain is on the cytoplasmic side. Residues Leu123–Ser143 form a helical membrane-spanning segment. Residue Ser144 is a topological domain, lumenal.

Belongs to the cornichon family. Interacts with AREG immature precursor and with immature TGFA, i.e. with a prosegment and lacking full N-glycosylation, but not with the fully N-glycosylated form. In the Golgi apparatus, may form a complex with GORASP55 and transmembrane TGFA.

The protein resides in the endoplasmic reticulum membrane. It is found in the golgi apparatus membrane. In terms of biological role, involved in the selective transport and maturation of TGF-alpha family proteins. This chain is Protein cornichon homolog 1 (CNIH1), found in Bos taurus (Bovine).